Reading from the N-terminus, the 208-residue chain is Ribosome maturation factor RimM (208 aa).

A PRC barrel domain is found at 98-205 (ADEFYVPDLI…IIEITPPDGL (108 aa)). Residues 154 to 174 (LPSKSKRSRDTKNQKKNQSPP) are disordered.

This sequence belongs to the RimM family. Binds ribosomal protein uS19.

It is found in the cytoplasm. Its function is as follows. An accessory protein needed during the final step in the assembly of 30S ribosomal subunit, possibly for assembly of the head region. Essential for efficient processing of 16S rRNA. May be needed both before and after RbfA during the maturation of 16S rRNA. It has affinity for free ribosomal 30S subunits but not for 70S ribosomes. This chain is Ribosome maturation factor RimM, found in Trichodesmium erythraeum (strain IMS101).